The following is a 701-amino-acid chain: Transcriptional regulator Kaiso (701 aa).

The BTB domain occupies 32 to 94 (CDVTVIVEDR…IYSSKIVRVR (63 aa)). Disordered stretches follow at residues 128–158 (GAGGKDGGTDAPSNPDHKAPEPQKSSDSPLP) and 181–311 (SSDD…QNQH). Positions 245-258 (TPSSQVQLTQNSLP) are enriched in polar residues. Positions 259–273 (TNQQSSKNTSSTTQK) are enriched in low complexity. Residues 278-311 (VNANISKNPTPAANGFLSPTAQKQGTPNAVQNQH) show a composition bias toward polar residues. Positions 470–609 (AKLDLDGLPN…QIRQYAYVNN (140 aa)) are required for methylation dependent DNA-binding. 3 consecutive C2H2-type zinc fingers follow at residues 501-523 (YICIVCKRSYVCLTSLRRHFNVH), 529-551 (YPCRYCERVFPLAEYRTKHEIHH), and 557-580 (YQCLTCGSSFINYQVMASHIRSVH). The interval 519 to 701 (HFNVHSWEKK…EFEFVIPESY (183 aa)) is required for sequence specific DNA-binding. Residues 644–664 (DIDPDEPQQPASEGNHANSAT) form a disordered region. Positions 652–664 (QPASEGNHANSAT) are enriched in polar residues.

As to quaternary structure, self associates. Interacts with tcf7l1-A, leading to repression of tcf7l1-A target genes. Interacts with ctnnd1, and this interaction may inhibit DNA-binding. Interacts with ncor1.

The protein resides in the nucleus. In terms of biological role, transcriptional regulator with bimodal DNA-binding specificity. Binds to methylated CpG dinucleotides in the consensus sequence 5'-CGCG-3' and also binds to the non-methylated consensus sequence 5'-CTGCNA-3'. May recruit the N-CoR repressor complex to promote histone deacetylation and the formation of repressive chromatin structures in target gene promoters. Contributes to the repression of target genes of the Wnt signaling pathway and to the methylation-dependent repression of zygotic transcription prior to the mid-blastula transition (MBT). Also required for gastrulation movements. The chain is Transcriptional regulator Kaiso (zbtb33) from Xenopus laevis (African clawed frog).